A 171-amino-acid chain; its full sequence is Adenine phosphoribosyltransferase (171 aa).

The protein belongs to the purine/pyrimidine phosphoribosyltransferase family. As to quaternary structure, homodimer.

The protein localises to the cytoplasm. The catalysed reaction is AMP + diphosphate = 5-phospho-alpha-D-ribose 1-diphosphate + adenine. It functions in the pathway purine metabolism; AMP biosynthesis via salvage pathway; AMP from adenine: step 1/1. Its function is as follows. Catalyzes a salvage reaction resulting in the formation of AMP, that is energically less costly than de novo synthesis. The chain is Adenine phosphoribosyltransferase from Mycoplasma mobile (strain ATCC 43663 / 163K / NCTC 11711) (Mesomycoplasma mobile).